The sequence spans 623 residues: Chaperone protein DnaK (623 aa).

A Phosphothreonine; by autocatalysis modification is found at T175. The interval 580–623 (PEGAQGAGFDPNNMGGANAGNASAGNDKKDDNVVDADFKVEDDK) is disordered. The span at 591–604 (NNMGGANAGNASAG) shows a compositional bias: low complexity. Residues 605–623 (NDKKDDNVVDADFKVEDDK) show a composition bias toward basic and acidic residues.

It belongs to the heat shock protein 70 family.

Functionally, acts as a chaperone. The chain is Chaperone protein DnaK from Clostridium botulinum (strain Hall / ATCC 3502 / NCTC 13319 / Type A).